A 301-amino-acid chain; its full sequence is Homoserine O-acetyltransferase (301 aa).

Cys-142 (acyl-thioester intermediate) is an active-site residue. Substrate contacts are provided by Lys-163 and Ser-192. The active-site Proton acceptor is the His-235. The active site involves Glu-237. Substrate is bound at residue Arg-249.

It belongs to the MetA family.

The protein localises to the cytoplasm. The enzyme catalyses L-homoserine + acetyl-CoA = O-acetyl-L-homoserine + CoA. It participates in amino-acid biosynthesis; L-methionine biosynthesis via de novo pathway; O-acetyl-L-homoserine from L-homoserine: step 1/1. Transfers an acetyl group from acetyl-CoA to L-homoserine, forming acetyl-L-homoserine. In Succinatimonas hippei (strain DSM 22608 / JCM 16073 / KCTC 15190 / YIT 12066), this protein is Homoserine O-acetyltransferase.